The chain runs to 279 residues: NADPH-dependent 7-cyano-7-deazaguanine reductase (279 aa).

86–88 (IES) is a substrate binding site. Residue 88–89 (SK) coordinates NADPH. The active-site Thioimide intermediate is the C187. D194 (proton donor) is an active-site residue. 226–227 (HE) serves as a coordination point for substrate. Position 255–256 (255–256 (RG)) interacts with NADPH.

Belongs to the GTP cyclohydrolase I family. QueF type 2 subfamily. In terms of assembly, homodimer.

The protein localises to the cytoplasm. It carries out the reaction 7-aminomethyl-7-carbaguanine + 2 NADP(+) = 7-cyano-7-deazaguanine + 2 NADPH + 3 H(+). The protein operates within tRNA modification; tRNA-queuosine biosynthesis. Catalyzes the NADPH-dependent reduction of 7-cyano-7-deazaguanine (preQ0) to 7-aminomethyl-7-deazaguanine (preQ1). The polypeptide is NADPH-dependent 7-cyano-7-deazaguanine reductase (Pasteurella multocida (strain Pm70)).